The sequence spans 174 residues: Dual-action ribosomal maturation protein DarP (174 aa).

This sequence belongs to the DarP family.

The protein localises to the cytoplasm. Functionally, member of a network of 50S ribosomal subunit biogenesis factors which assembles along the 30S-50S interface, preventing incorrect 23S rRNA structures from forming. Promotes peptidyl transferase center (PTC) maturation. The sequence is that of Dual-action ribosomal maturation protein DarP from Vibrio campbellii (strain ATCC BAA-1116).